The primary structure comprises 676 residues: Translation initiation factor IF-2, mitochondrial (676 aa).

The tr-type G domain maps to 143-326 (KRAPVVTIMG…MDIRAENSPK (184 aa)). A G1 region spans residues 152 to 159 (GHVDHGKT). Residue 152–159 (GHVDHGKT) participates in GTP binding. Residues 177–181 (GITQH) form a G2 region. Residues 200–203 (DTPG) and 254–257 (TKID) each bind GTP. A G3 region spans residues 200–203 (DTPG). A G4 region spans residues 254–257 (TKID). Residues 296–298 (SAK) are G5.

It belongs to the TRAFAC class translation factor GTPase superfamily. Classic translation factor GTPase family. IF-2 subfamily.

Its subcellular location is the mitochondrion. One of the essential components for the initiation of protein synthesis. Protects formylmethionyl-tRNA from spontaneous hydrolysis and promotes its binding to the 30S ribosomal subunits. Also involved in the hydrolysis of GTP during the formation of the 70S ribosomal complex. This is Translation initiation factor IF-2, mitochondrial (IFM1) from Saccharomyces cerevisiae (strain ATCC 204508 / S288c) (Baker's yeast).